Consider the following 398-residue polypeptide: Aspartic protease 3 (398 aa).

The first 17 residues, M1–A17, serve as a signal peptide directing secretion. The propeptide at I18–D55 is removed in mature form. In terms of domain architecture, Peptidase A1 spans Y69–A392. D87 is an active-site residue. An intrachain disulfide couples C100 to C107. D279 is a catalytic residue. A disulfide bond links C313 and C351. N321 is a glycosylation site (N-linked (GlcNAc...) asparagine).

Belongs to the peptidase A1 family. In terms of tissue distribution, highly expressed in intestine and to a lower extent in body wall muscles, hypodermis and neurons.

Its subcellular location is the cytoplasm. It is found in the lysosome. It localises to the secreted. Its function is as follows. Aspartic protease. Part of the necrosis cell death pathway. Involved in neuronal cell degeneration. Involved in heat stress response. This chain is Aspartic protease 3, found in Caenorhabditis elegans.